A 135-amino-acid polypeptide reads, in one-letter code: Putative pre-16S rRNA nuclease (135 aa).

Belongs to the YqgF nuclease family.

It localises to the cytoplasm. Could be a nuclease involved in processing of the 5'-end of pre-16S rRNA. In Maridesulfovibrio salexigens (strain ATCC 14822 / DSM 2638 / NCIMB 8403 / VKM B-1763) (Desulfovibrio salexigens), this protein is Putative pre-16S rRNA nuclease.